A 348-amino-acid polypeptide reads, in one-letter code: Selenide, water dikinase (348 aa).

The active site involves Cys17. Residues Lys20 and 48–50 (TRD) each bind ATP. Mg(2+) is bound at residue Asp51. ATP contacts are provided by residues Asp68, Asp91, and 139-141 (GHS). Asp91 contacts Mg(2+). Asp227 provides a ligand contact to Mg(2+).

Belongs to the selenophosphate synthase 1 family. Class I subfamily. As to quaternary structure, homodimer. Mg(2+) serves as cofactor.

The enzyme catalyses hydrogenselenide + ATP + H2O = selenophosphate + AMP + phosphate + 2 H(+). Its function is as follows. Synthesizes selenophosphate from selenide and ATP. The protein is Selenide, water dikinase of Yersinia pseudotuberculosis serotype I (strain IP32953).